A 45-amino-acid polypeptide reads, in one-letter code: Small polypeptide DEVIL 23 (45 aa).

Residues 13-44 are required for DVL/RTFL small polypeptide activity; the sequence is KSTLRCWDWCKEQRTRAYIIWRCLIFLLRWDD. Residues 22–39 form a helical membrane-spanning segment; that stretch reads CKEQRTRAYIIWRCLIFL.

It belongs to the DVL/RTFL small polypeptides family.

It localises to the cell membrane. In terms of biological role, small polypeptide acting as a regulatory molecule which coordinates cellular responses required for differentiation, growth and development, probably by restricting polar cell proliferation in lateral organs and coordinating socket cell recruitment and differentiation at trichome sites. This chain is Small polypeptide DEVIL 23, found in Arabidopsis thaliana (Mouse-ear cress).